We begin with the raw amino-acid sequence, 146 residues long: Leptin (146 aa).

Cys96 and Cys146 form a disulfide bridge.

The protein belongs to the leptin family.

It localises to the secreted. In terms of biological role, key player in the regulation of energy balance and body weight control. Once released into the circulation, has central and peripheral effects by binding LEPR, found in many tissues, which results in the activation of several major signaling pathways. In the hypothalamus, acts as an appetite-regulating factor that induces a decrease in food intake and an increase in energy consumption by inducing anorexinogenic factors and suppressing orexigenic neuropeptides, also regulates bone mass and secretion of hypothalamo-pituitary-adrenal hormones. In the periphery, increases basal metabolism, influences reproductive function, regulates pancreatic beta-cell function and insulin secretion, is pro-angiogenic for endothelial cell and affects innate and adaptive immunity. In the arcuate nucleus of the hypothalamus, activates by depolarization POMC neurons inducing FOS and SOCS3 expression to release anorexigenic peptides and inhibits by hyperpolarization NPY neurons inducing SOCS3 with a consequent reduction on release of orexigenic peptides. In addition to its known satiety inducing effect, has a modulatory role in nutrient absorption. In the intestine, reduces glucose absorption by enterocytes by activating PKC and leading to a sequential activation of p38, PI3K and ERK signaling pathways which exerts an inhibitory effect on glucose absorption. Acts as a growth factor on certain tissues, through the activation of different signaling pathways increases expression of genes involved in cell cycle regulation such as CCND1, via JAK2-STAT3 pathway, or VEGFA, via MAPK1/3 and PI3K-AKT1 pathways. May also play an apoptotic role via JAK2-STAT3 pathway and up-regulation of BIRC5 expression. Pro-angiogenic, has mitogenic activity on vascular endothelial cells and plays a role in matrix remodeling by regulating the expression of matrix metalloproteinases (MMPs) and tissue inhibitors of metalloproteinases (TIMPs). In innate immunity, modulates the activity and function of neutrophils by increasing chemotaxis and the secretion of oxygen radicals. Increases phagocytosis by macrophages and enhances secretion of pro-inflammatory mediators. Increases cytotoxic ability of NK cells. Plays a pro-inflammatory role, in synergy with IL1B, by inducing NOS2 which promotes the production of IL6, IL8 and Prostaglandin E2, through a signaling pathway that involves JAK2, PI3K, MAP2K1/MEK1 and MAPK14/p38. In adaptive immunity, promotes the switch of memory T-cells towards T helper-1 cell immune responses. Increases CD4(+)CD25(-) T-cell proliferation and reduces autophagy during TCR (T-cell receptor) stimulation, through MTOR signaling pathway activation and BCL2 up-regulation. The polypeptide is Leptin (LEP) (Pongo pygmaeus (Bornean orangutan)).